The chain runs to 221 residues: Large ribosomal subunit protein uL3 (221 aa).

This sequence belongs to the universal ribosomal protein uL3 family. Part of the 50S ribosomal subunit. Forms a cluster with proteins L14 and L19.

Functionally, one of the primary rRNA binding proteins, it binds directly near the 3'-end of the 23S rRNA, where it nucleates assembly of the 50S subunit. This is Large ribosomal subunit protein uL3 from Chlamydia trachomatis serovar L2 (strain ATCC VR-902B / DSM 19102 / 434/Bu).